The primary structure comprises 199 residues: AICSLVLYLLTLMLMEKLSSNTVDAQEVELIWTILPAIVLILLALPSLQILYMMDEIDEPDLTLKAIGHQWYWTYEYTDFKDLSFDSYMVPTSELPSGHFRLLEVDHRVVVPMESPIRVIITAGDVLHSWAVPTLGVKTDAIPGRLNQTSFITTRPGIFYGQCSEICGANHSYMPIVVESTPLTHFENWSSLLSISSSL.

Residues 1-13 form a helical membrane-spanning segment; sequence AICSLVLYLLTLM. Over 14–26 the chain is Mitochondrial matrix; it reads LMEKLSSNTVDAQ. The chain crosses the membrane as a helical span at residues 27-54; that stretch reads EVELIWTILPAIVLILLALPSLQILYMM. At 55 to 199 the chain is on the mitochondrial intermembrane side; the sequence is DEIDEPDLTL…SSLLSISSSL (145 aa). Positions 128, 163, 165, 167, 171, and 174 each coordinate Cu cation. Residue Glu-165 coordinates Mg(2+).

It belongs to the cytochrome c oxidase subunit 2 family. Component of the cytochrome c oxidase (complex IV, CIV), a multisubunit enzyme composed of 14 subunits. The complex is composed of a catalytic core of 3 subunits MT-CO1, MT-CO2 and MT-CO3, encoded in the mitochondrial DNA, and 11 supernumerary subunits COX4I, COX5A, COX5B, COX6A, COX6B, COX6C, COX7A, COX7B, COX7C, COX8 and NDUFA4, which are encoded in the nuclear genome. The complex exists as a monomer or a dimer and forms supercomplexes (SCs) in the inner mitochondrial membrane with NADH-ubiquinone oxidoreductase (complex I, CI) and ubiquinol-cytochrome c oxidoreductase (cytochrome b-c1 complex, complex III, CIII), resulting in different assemblies (supercomplex SCI(1)III(2)IV(1) and megacomplex MCI(2)III(2)IV(2)). Found in a complex with TMEM177, COA6, COX18, COX20, SCO1 and SCO2. Interacts with TMEM177 in a COX20-dependent manner. Interacts with COX20. Interacts with COX16. Requires Cu cation as cofactor.

It is found in the mitochondrion inner membrane. The catalysed reaction is 4 Fe(II)-[cytochrome c] + O2 + 8 H(+)(in) = 4 Fe(III)-[cytochrome c] + 2 H2O + 4 H(+)(out). Component of the cytochrome c oxidase, the last enzyme in the mitochondrial electron transport chain which drives oxidative phosphorylation. The respiratory chain contains 3 multisubunit complexes succinate dehydrogenase (complex II, CII), ubiquinol-cytochrome c oxidoreductase (cytochrome b-c1 complex, complex III, CIII) and cytochrome c oxidase (complex IV, CIV), that cooperate to transfer electrons derived from NADH and succinate to molecular oxygen, creating an electrochemical gradient over the inner membrane that drives transmembrane transport and the ATP synthase. Cytochrome c oxidase is the component of the respiratory chain that catalyzes the reduction of oxygen to water. Electrons originating from reduced cytochrome c in the intermembrane space (IMS) are transferred via the dinuclear copper A center (CU(A)) of subunit 2 and heme A of subunit 1 to the active site in subunit 1, a binuclear center (BNC) formed by heme A3 and copper B (CU(B)). The BNC reduces molecular oxygen to 2 water molecules using 4 electrons from cytochrome c in the IMS and 4 protons from the mitochondrial matrix. The sequence is that of Cytochrome c oxidase subunit 2 (MT-CO2) from Casuarius bennetti (Dwarf cassowary).